The sequence spans 380 residues: Cytochrome b (380 aa).

4 helical membrane-spanning segments follow: residues 34-54, 78-99, 114-134, and 179-199; these read FGSLLGICLMTQILTGLLLAM, WLIRNLHANGASFFFICIYLHI, WNTGIILLLTLMATAFVGYVL, and FFALHFLLPFAIAGLTLIHLT. 2 residues coordinate heme b: H84 and H98. Heme b-binding residues include H183 and H197. H202 contributes to the a ubiquinone binding site. 4 helical membrane passes run 227–247, 289–309, 321–341, and 348–368; these read LKDILGFALMVLPLTSLALFS, LGGVLALAASVLVLFLSPFLH, LSQLLFWILVTNLFILTWVGS, and FIIIGQLASITYFTILLILFP.

The protein belongs to the cytochrome b family. In terms of assembly, the cytochrome bc1 complex contains 11 subunits: 3 respiratory subunits (MT-CYB, CYC1 and UQCRFS1), 2 core proteins (UQCRC1 and UQCRC2) and 6 low-molecular weight proteins (UQCRH/QCR6, UQCRB/QCR7, UQCRQ/QCR8, UQCR10/QCR9, UQCR11/QCR10 and a cleavage product of UQCRFS1). This cytochrome bc1 complex then forms a dimer. It depends on heme b as a cofactor.

Its subcellular location is the mitochondrion inner membrane. Its function is as follows. Component of the ubiquinol-cytochrome c reductase complex (complex III or cytochrome b-c1 complex) that is part of the mitochondrial respiratory chain. The b-c1 complex mediates electron transfer from ubiquinol to cytochrome c. Contributes to the generation of a proton gradient across the mitochondrial membrane that is then used for ATP synthesis. This chain is Cytochrome b (MT-CYB), found in Macronectes giganteus (Southern giant petrel).